Consider the following 67-residue polypeptide: Protein AaeX (67 aa).

2 consecutive transmembrane segments (helical) span residues 3–23 (LFPV…KLLL) and 43–63 (FVWH…YLIS).

It belongs to the AaeX family.

The protein localises to the cell membrane. The sequence is that of Protein AaeX from Salmonella gallinarum (strain 287/91 / NCTC 13346).